The following is a 300-amino-acid chain: Ribonuclease HIII (300 aa).

Residues 86–300 (RPRLGVDESG…FNEICDSASA (215 aa)) enclose the RNase H type-2 domain. Residues D92, E93, and D196 each coordinate a divalent metal cation.

It belongs to the RNase HII family. RnhC subfamily. Mn(2+) serves as cofactor. It depends on Mg(2+) as a cofactor.

The protein resides in the cytoplasm. The catalysed reaction is Endonucleolytic cleavage to 5'-phosphomonoester.. Functionally, endonuclease that specifically degrades the RNA of RNA-DNA hybrids. This chain is Ribonuclease HIII, found in Chlamydia felis (strain Fe/C-56) (Chlamydophila felis).